The following is a 334-amino-acid chain: Ribosomal RNA small subunit methyltransferase H (334 aa).

Residues 54–56, Asp74, Phe100, Asp121, and Gln128 contribute to the S-adenosyl-L-methionine site; that span reads GGH. The interval 272 to 318 is disordered; sequence RHSKGQYPEDENLPMPPKRPRYFSKPKRVGPSKAEISNNPRSRSAWL. A compositionally biased stretch (basic residues) spans 289-301; that stretch reads KRPRYFSKPKRVG.

This sequence belongs to the methyltransferase superfamily. RsmH family.

It localises to the cytoplasm. The catalysed reaction is cytidine(1402) in 16S rRNA + S-adenosyl-L-methionine = N(4)-methylcytidine(1402) in 16S rRNA + S-adenosyl-L-homocysteine + H(+). Functionally, specifically methylates the N4 position of cytidine in position 1402 (C1402) of 16S rRNA. The polypeptide is Ribosomal RNA small subunit methyltransferase H (Psychrobacter arcticus (strain DSM 17307 / VKM B-2377 / 273-4)).